The chain runs to 294 residues: Nucleotide-binding protein Daud_0300 (294 aa).

An ATP-binding site is contributed by 11–18 (GLSGAGKT). Residue 62–65 (DIRG) coordinates GTP.

It belongs to the RapZ-like family.

Functionally, displays ATPase and GTPase activities. The sequence is that of Nucleotide-binding protein Daud_0300 from Desulforudis audaxviator (strain MP104C).